The primary structure comprises 421 residues: Forkhead box protein fkh-3 (421 aa).

The segment at residues 118 to 218 (RPPISYVALC…SDADFDFFRK (101 aa)) is a DNA-binding region (fork-head).

Its subcellular location is the nucleus. In terms of biological role, transcription factor. Binds to DNA sequence motif 5'-CTGTTTCA-3'. Regulates expression of a class of small RNAs, known as 21U-RNAs, perhaps acting redundantly with fkh-4 and fkh-5. This is Forkhead box protein fkh-3 from Caenorhabditis elegans.